An 89-amino-acid chain; its full sequence is Large ribosomal subunit protein bL31B (89 aa).

It belongs to the bacterial ribosomal protein bL31 family. Type B subfamily. In terms of assembly, part of the 50S ribosomal subunit.

The protein is Large ribosomal subunit protein bL31B of Corynebacterium aurimucosum (strain ATCC 700975 / DSM 44827 / CIP 107346 / CN-1) (Corynebacterium nigricans).